The chain runs to 669 residues: DNA mismatch repair protein MutL (669 aa).

Residues 356-371 (FEQRQNTENKQEKTFS) are compositionally biased toward basic and acidic residues. Positions 356–379 (FEQRQNTENKQEKTFSSEESNSKP) are disordered.

This sequence belongs to the DNA mismatch repair MutL/HexB family.

Functionally, this protein is involved in the repair of mismatches in DNA. It is required for dam-dependent methyl-directed DNA mismatch repair. May act as a 'molecular matchmaker', a protein that promotes the formation of a stable complex between two or more DNA-binding proteins in an ATP-dependent manner without itself being part of a final effector complex. This is DNA mismatch repair protein MutL from Staphylococcus aureus (strain MRSA252).